A 310-amino-acid chain; its full sequence is Ornithine carbamoyltransferase (310 aa).

Carbamoyl phosphate contacts are provided by residues 57-60 (STRT), Q84, R108, and 135-138 (HPCQ). Residues N166, D229, and 233 to 234 (SM) contribute to the L-ornithine site. Carbamoyl phosphate is bound by residues 269-270 (CL) and R297.

This sequence belongs to the aspartate/ornithine carbamoyltransferase superfamily. OTCase family.

The protein resides in the cytoplasm. The enzyme catalyses carbamoyl phosphate + L-ornithine = L-citrulline + phosphate + H(+). It participates in amino-acid biosynthesis; L-arginine biosynthesis; L-arginine from L-ornithine and carbamoyl phosphate: step 1/3. In terms of biological role, reversibly catalyzes the transfer of the carbamoyl group from carbamoyl phosphate (CP) to the N(epsilon) atom of ornithine (ORN) to produce L-citrulline. The sequence is that of Ornithine carbamoyltransferase from Thermosynechococcus vestitus (strain NIES-2133 / IAM M-273 / BP-1).